The following is a 436-amino-acid chain: 3-ketoacyl-CoA thiolase (436 aa).

Cys-99 acts as the Acyl-thioester intermediate in catalysis. Active-site proton acceptor residues include His-392 and Cys-422.

Belongs to the thiolase-like superfamily. Thiolase family. As to quaternary structure, heterotetramer of two alpha chains (FadJ) and two beta chains (FadI).

Its subcellular location is the cytoplasm. It carries out the reaction an acyl-CoA + acetyl-CoA = a 3-oxoacyl-CoA + CoA. The protein operates within lipid metabolism; fatty acid beta-oxidation. Its function is as follows. Catalyzes the final step of fatty acid oxidation in which acetyl-CoA is released and the CoA ester of a fatty acid two carbons shorter is formed. In Escherichia coli (strain 55989 / EAEC), this protein is 3-ketoacyl-CoA thiolase.